Consider the following 456-residue polypeptide: ATP synthase subunit beta 1 (456 aa).

152–159 (GGAGVGKS) contributes to the ATP binding site.

Belongs to the ATPase alpha/beta chains family. In terms of assembly, F-type ATPases have 2 components, CF(1) - the catalytic core - and CF(0) - the membrane proton channel. CF(1) has five subunits: alpha(3), beta(3), gamma(1), delta(1), epsilon(1). CF(0) has three main subunits: a(1), b(2) and c(9-12). The alpha and beta chains form an alternating ring which encloses part of the gamma chain. CF(1) is attached to CF(0) by a central stalk formed by the gamma and epsilon chains, while a peripheral stalk is formed by the delta and b chains.

The protein localises to the cell membrane. It carries out the reaction ATP + H2O + 4 H(+)(in) = ADP + phosphate + 5 H(+)(out). Functionally, produces ATP from ADP in the presence of a proton gradient across the membrane. The catalytic sites are hosted primarily by the beta subunits. This Listeria welshimeri serovar 6b (strain ATCC 35897 / DSM 20650 / CCUG 15529 / CIP 8149 / NCTC 11857 / SLCC 5334 / V8) protein is ATP synthase subunit beta 1.